The sequence spans 558 residues: Glucose-6-phosphate isomerase (558 aa).

N6-acetyllysine is present on K12. S86 and S107 each carry phosphoserine. Residue K142 is modified to N6-acetyllysine. 159–160 (GS) serves as a coordination point for D-glucose 6-phosphate. A Phosphoserine; by CK2 modification is found at S185. 210–215 (SKTFTT) serves as a coordination point for D-glucose 6-phosphate. T250 carries the phosphothreonine modification. Q354, E358, and H389 together coordinate D-glucose 6-phosphate. E358 serves as the catalytic Proton donor. Residue H389 is part of the active site. K454 carries the N6-acetyllysine; alternate modification. K454 carries the post-translational modification N6-malonyllysine; alternate. Position 454 is an N6-succinyllysine; alternate (K454). The residue at position 455 (S455) is a Phosphoserine. K519 is a D-glucose 6-phosphate binding site. The active site involves K519.

The protein belongs to the GPI family. In terms of assembly, homodimer; in the catalytically active form. Monomer in the secreted form. In terms of processing, phosphorylation at Ser-185 by CK2 has been shown to decrease enzymatic activity and may contribute to secretion by a non-classical secretory pathway. ISGylated.

The protein resides in the cytoplasm. The protein localises to the secreted. It catalyses the reaction alpha-D-glucose 6-phosphate = beta-D-fructose 6-phosphate. Its pathway is carbohydrate degradation; glycolysis; D-glyceraldehyde 3-phosphate and glycerone phosphate from D-glucose: step 2/4. Functionally, in the cytoplasm, catalyzes the conversion of glucose-6-phosphate to fructose-6-phosphate, the second step in glycolysis, and the reverse reaction during gluconeogenesis. Besides it's role as a glycolytic enzyme, also acts as a secreted cytokine: acts as an angiogenic factor (AMF) that stimulates endothelial cell motility. Acts as a neurotrophic factor, neuroleukin, for spinal and sensory neurons. It is secreted by lectin-stimulated T-cells and induces immunoglobulin secretion. This chain is Glucose-6-phosphate isomerase, found in Cricetulus griseus (Chinese hamster).